A 773-amino-acid chain; its full sequence is Serine/threonine-protein kinase CBK1 (773 aa).

2 stretches are compositionally biased toward polar residues: residues 50–59 (LHDQYSSHME) and 178–217 (GNYN…SPQR). Disordered regions lie at residues 50-111 (LHDQ…GGNI) and 177-275 (NGNY…QQQQ). Composition is skewed to low complexity over residues 218-256 (QPAQ…QQQP) and 265-275 (QQTQLQQQQQQ). The 317-residue stretch at 370–686 (FHTVQVIGKG…ADEIKSHPFF (317 aa)) folds into the Protein kinase domain. Residues 376–384 (IGKGAFGEV) and Lys-399 each bind ATP. Asp-493 acts as the Proton acceptor in catalysis. The AGC-kinase C-terminal domain occupies 687-771 (RGVDWNTIRQ…SRFDYLTRKN (85 aa)).

This sequence belongs to the protein kinase superfamily. STE Ser/Thr protein kinase family. COT1 subfamily.

It carries out the reaction L-seryl-[protein] + ATP = O-phospho-L-seryl-[protein] + ADP + H(+). The enzyme catalyses L-threonyl-[protein] + ATP = O-phospho-L-threonyl-[protein] + ADP + H(+). Protein kinase that seems to play a role in the regulation of cell morphogenesis and proliferation. In Candida glabrata (strain ATCC 2001 / BCRC 20586 / JCM 3761 / NBRC 0622 / NRRL Y-65 / CBS 138) (Yeast), this protein is Serine/threonine-protein kinase CBK1 (CBK1).